The following is a 98-amino-acid chain: N(2)-fixation sustaining protein CowN (98 aa).

This sequence belongs to the CowN family.

Its function is as follows. Is required to sustain N(2)-dependent growth in the presence of low levels of carbon monoxide (CO). Probably acts by protecting the N(2) fixation ability of the nitrogenase complex, which is inactivated in the presence of CO. The sequence is that of N(2)-fixation sustaining protein CowN from Dechloromonas aromatica (strain RCB).